The following is a 155-amino-acid chain: Riboflavin synthase (155 aa).

It belongs to the DMRL synthase family.

The enzyme catalyses 2 6,7-dimethyl-8-(1-D-ribityl)lumazine + H(+) = 5-amino-6-(D-ribitylamino)uracil + riboflavin. Its pathway is cofactor biosynthesis; riboflavin biosynthesis; riboflavin from 2-hydroxy-3-oxobutyl phosphate and 5-amino-6-(D-ribitylamino)uracil: step 2/2. This is Riboflavin synthase (ribC) from Aeropyrum pernix (strain ATCC 700893 / DSM 11879 / JCM 9820 / NBRC 100138 / K1).